The sequence spans 532 residues: Intercellular adhesion molecule 1 (532 aa).

Positions 1-27 are cleaved as a signal peptide; the sequence is MAPSSPRPALPALLVLLGALFPGPGNA. At 28–480 the chain is on the extracellular side; the sequence is QTSVSPPKVI…TVNVLSPRYE (453 aa). Ig-like C2-type domains follow at residues 41 to 103 and 128 to 193; these read GGSV…QSTA and GKDL…LDLR. 3 cysteine pairs are disulfide-bonded: cysteine 48/cysteine 92, cysteine 52/cysteine 96, and cysteine 135/cysteine 186. The Cell attachment site; atypical signature appears at 152–154; sequence RGE. N-linked (GlcNAc...) asparagine glycans are attached at residues asparagine 202 and asparagine 267. 2 Ig-like C2-type domains span residues 230–297 and 325–378; these read DTQG…LGTQ and GTEV…LEVA. Cystine bridges form between cysteine 237–cysteine 290 and cysteine 332–cysteine 371. 2 N-linked (GlcNAc...) asparagine glycosylation sites follow: asparagine 385 and asparagine 406. Disulfide bonds link cysteine 403/cysteine 419, cysteine 419/cysteine 457, and cysteine 431/cysteine 457. Residues 412-464 enclose the Ig-like C2-type 5 domain; the sequence is NSQQTPMCQAWGNPLPELKCLKDGTFPLPVGESVTVTRDLEGTYLCRARSTQG. A helical transmembrane segment spans residues 481 to 503; the sequence is FVIIAVVAAAVIMGTAGLSTYLY. The Cytoplasmic portion of the chain corresponds to 504–532; it reads NRQRKIRKYRLQQAQKGTPMKPNTQATPP. 2 positions are modified to phosphothreonine: threonine 521 and threonine 530.

This sequence belongs to the immunoglobulin superfamily. ICAM family. As to quaternary structure, homodimer. Interacts with MUC1 and promotes cell aggregation in epithelial cells. Interacts with ARHGEF26/SGEF. Interacts (on T cell side) with CD81, CD247 and CD9 at immunological synapses between antigen-presenting cells and T cells. Post-translationally, monoubiquitinated, which is promoted by MARCH9 and leads to endocytosis.

It localises to the membrane. ICAM proteins are ligands for the leukocyte adhesion protein LFA-1 (integrin alpha-L/beta-2). During leukocyte trans-endothelial migration, ICAM1 engagement promotes the assembly of endothelial apical cups through ARHGEF26/SGEF and RHOG activation. In Gorilla gorilla gorilla (Western lowland gorilla), this protein is Intercellular adhesion molecule 1 (ICAM1).